Consider the following 456-residue polypeptide: Bifunctional protein GlmU (456 aa).

A pyrophosphorylase region spans residues 1 to 229 (MLNSAMSVVI…LSEVEGVNNR (229 aa)). UDP-N-acetyl-alpha-D-glucosamine-binding positions include 11–14 (LAAG), K25, Q76, 81–82 (GT), 103–105 (YGD), G140, E154, N169, and N227. D105 contributes to the Mg(2+) binding site. N227 is a binding site for Mg(2+). The tract at residues 230 to 250 (LQLSALERIYQREQADKLLLA) is linker. The tract at residues 251 to 456 (GVMLLDPARF…SGWQRPVKKK (206 aa)) is N-acetyltransferase. Residues R333 and K351 each contribute to the UDP-N-acetyl-alpha-D-glucosamine site. H363 functions as the Proton acceptor in the catalytic mechanism. Residues Y366 and N377 each contribute to the UDP-N-acetyl-alpha-D-glucosamine site. Acetyl-CoA contacts are provided by residues A380, 386–387 (NY), S405, A423, and R440.

In the N-terminal section; belongs to the N-acetylglucosamine-1-phosphate uridyltransferase family. This sequence in the C-terminal section; belongs to the transferase hexapeptide repeat family. As to quaternary structure, homotrimer. Mg(2+) serves as cofactor.

It localises to the cytoplasm. The enzyme catalyses alpha-D-glucosamine 1-phosphate + acetyl-CoA = N-acetyl-alpha-D-glucosamine 1-phosphate + CoA + H(+). The catalysed reaction is N-acetyl-alpha-D-glucosamine 1-phosphate + UTP + H(+) = UDP-N-acetyl-alpha-D-glucosamine + diphosphate. It participates in nucleotide-sugar biosynthesis; UDP-N-acetyl-alpha-D-glucosamine biosynthesis; N-acetyl-alpha-D-glucosamine 1-phosphate from alpha-D-glucosamine 6-phosphate (route II): step 2/2. The protein operates within nucleotide-sugar biosynthesis; UDP-N-acetyl-alpha-D-glucosamine biosynthesis; UDP-N-acetyl-alpha-D-glucosamine from N-acetyl-alpha-D-glucosamine 1-phosphate: step 1/1. It functions in the pathway bacterial outer membrane biogenesis; LPS lipid A biosynthesis. In terms of biological role, catalyzes the last two sequential reactions in the de novo biosynthetic pathway for UDP-N-acetylglucosamine (UDP-GlcNAc). The C-terminal domain catalyzes the transfer of acetyl group from acetyl coenzyme A to glucosamine-1-phosphate (GlcN-1-P) to produce N-acetylglucosamine-1-phosphate (GlcNAc-1-P), which is converted into UDP-GlcNAc by the transfer of uridine 5-monophosphate (from uridine 5-triphosphate), a reaction catalyzed by the N-terminal domain. The chain is Bifunctional protein GlmU from Pectobacterium atrosepticum (strain SCRI 1043 / ATCC BAA-672) (Erwinia carotovora subsp. atroseptica).